We begin with the raw amino-acid sequence, 261 residues long: Leucine-rich repeat-containing protein 61 (261 aa).

LRR repeat units lie at residues 54-75, 76-97, and 98-119; these read GLEW…ASLR, QLAV…AACE, and NLQC…QCLA. Residues 138–183 form the LRRCT domain; it reads NPLCASPCYWASVRELLPGLKVLDGERVSGRGSDFYQLCRDLDSSL.

The sequence is that of Leucine-rich repeat-containing protein 61 (LRRC61) from Bos taurus (Bovine).